We begin with the raw amino-acid sequence, 65 residues long: Large ribosomal subunit protein bL35 (65 aa).

This sequence belongs to the bacterial ribosomal protein bL35 family.

The protein is Large ribosomal subunit protein bL35 of Stenotrophomonas maltophilia (strain R551-3).